The chain runs to 399 residues: L-2-hydroxyglutarate dehydrogenase (399 aa).

Belongs to the L2HGDH family. Requires FAD as cofactor.

It catalyses the reaction (S)-2-hydroxyglutarate + A = 2-oxoglutarate + AH2. In terms of biological role, catalyzes the dehydrogenation of L-2-hydroxyglutarate (L2HG or(S)-2-hydroxyglutarate) to 2-oxoglutarate (alpha-ketoglutarate). Active in vitro with the artificial electron acceptor 2,6-dichlorophenolindophenol (DCPIP). Also displays a very low oxidase activity in vitro on L-2-hydroxyglutarate with O2 as the electron acceptor, but this activity is most likely not physiological. In Indibacter alkaliphilus (strain CCUG 57479 / KCTC 22604 / LW1), this protein is L-2-hydroxyglutarate dehydrogenase.